Reading from the N-terminus, the 329-residue chain is ATP-dependent (S)-NAD(P)H-hydrate dehydratase (329 aa).

Residues 35-326 enclose the YjeF C-terminal domain; the sequence is TLQLVRNIIP…AEVGAAFSKL (292 aa). Tyrosine 67 carries the phosphotyrosine modification. (6S)-NADPHX is bound by residues glycine 135 and 188-194; that span reads NHMEFSR. Residues asparagine 207 and asparagine 222 are each glycosylated (N-linked (GlcNAc...) asparagine). ATP contacts are provided by residues 228-232 and 247-256; these read KGERD and GSSRRCGGQG. Aspartate 257 serves as a coordination point for (6S)-NADPHX. The N-linked (GlcNAc...) asparagine glycan is linked to asparagine 279.

This sequence belongs to the NnrD/CARKD family. It depends on Mg(2+) as a cofactor.

Its subcellular location is the mitochondrion. It carries out the reaction (6S)-NADHX + ATP = ADP + phosphate + NADH + H(+). The enzyme catalyses (6S)-NADPHX + ATP = ADP + phosphate + NADPH + H(+). Its function is as follows. Catalyzes the dehydration of the S-form of NAD(P)HX at the expense of ATP, which is converted to ADP. Together with NAD(P)HX epimerase, which catalyzes the epimerization of the S- and R-forms, the enzyme allows the repair of both epimers of NAD(P)HX, a damaged form of NAD(P)H that is a result of enzymatic or heat-dependent hydration. The chain is ATP-dependent (S)-NAD(P)H-hydrate dehydratase from Pongo abelii (Sumatran orangutan).